A 472-amino-acid chain; its full sequence is ATP synthase subunit beta (472 aa).

Residue 155–162 (GGAGVGKT) participates in ATP binding.

The protein belongs to the ATPase alpha/beta chains family. In terms of assembly, F-type ATPases have 2 components, CF(1) - the catalytic core - and CF(0) - the membrane proton channel. CF(1) has five subunits: alpha(3), beta(3), gamma(1), delta(1), epsilon(1). CF(0) has three main subunits: a(1), b(2) and c(9-12). The alpha and beta chains form an alternating ring which encloses part of the gamma chain. CF(1) is attached to CF(0) by a central stalk formed by the gamma and epsilon chains, while a peripheral stalk is formed by the delta and b chains.

It is found in the cell membrane. It catalyses the reaction ATP + H2O + 4 H(+)(in) = ADP + phosphate + 5 H(+)(out). In terms of biological role, produces ATP from ADP in the presence of a proton gradient across the membrane. The catalytic sites are hosted primarily by the beta subunits. This Fervidobacterium islandicum protein is ATP synthase subunit beta.